The following is a 101-amino-acid chain: Urease subunit beta (101 aa).

It belongs to the urease beta subunit family. As to quaternary structure, heterotrimer of UreA (gamma), UreB (beta) and UreC (alpha) subunits. Three heterotrimers associate to form the active enzyme.

It is found in the cytoplasm. The catalysed reaction is urea + 2 H2O + H(+) = hydrogencarbonate + 2 NH4(+). Its pathway is nitrogen metabolism; urea degradation; CO(2) and NH(3) from urea (urease route): step 1/1. The protein is Urease subunit beta of Jannaschia sp. (strain CCS1).